We begin with the raw amino-acid sequence, 316 residues long: Lipoyl synthase (316 aa).

C66, C71, C77, C92, C96, C99, and S306 together coordinate [4Fe-4S] cluster. In terms of domain architecture, Radical SAM core spans 78-295; it reads FNRGTATFMI…NLIAFDLGFK (218 aa).

The protein belongs to the radical SAM superfamily. Lipoyl synthase family. The cofactor is [4Fe-4S] cluster.

It is found in the cytoplasm. The catalysed reaction is [[Fe-S] cluster scaffold protein carrying a second [4Fe-4S](2+) cluster] + N(6)-octanoyl-L-lysyl-[protein] + 2 oxidized [2Fe-2S]-[ferredoxin] + 2 S-adenosyl-L-methionine + 4 H(+) = [[Fe-S] cluster scaffold protein] + N(6)-[(R)-dihydrolipoyl]-L-lysyl-[protein] + 4 Fe(3+) + 2 hydrogen sulfide + 2 5'-deoxyadenosine + 2 L-methionine + 2 reduced [2Fe-2S]-[ferredoxin]. It participates in protein modification; protein lipoylation via endogenous pathway; protein N(6)-(lipoyl)lysine from octanoyl-[acyl-carrier-protein]: step 2/2. In terms of biological role, catalyzes the radical-mediated insertion of two sulfur atoms into the C-6 and C-8 positions of the octanoyl moiety bound to the lipoyl domains of lipoate-dependent enzymes, thereby converting the octanoylated domains into lipoylated derivatives. This Wigglesworthia glossinidia brevipalpis protein is Lipoyl synthase.